The sequence spans 364 residues: 3-isopropylmalate dehydrogenase (364 aa).

Residue 79-92 (GPKWEHLPPDQQPE) participates in NAD(+) binding. Residues Arg100, Arg110, Arg139, and Asp228 each contribute to the substrate site. Positions 228, 252, and 256 each coordinate Mg(2+). 286 to 298 (GSAPDIAGKNIAN) serves as a coordination point for NAD(+).

This sequence belongs to the isocitrate and isopropylmalate dehydrogenases family. LeuB type 1 subfamily. As to quaternary structure, homodimer. Mg(2+) serves as cofactor. It depends on Mn(2+) as a cofactor.

Its subcellular location is the cytoplasm. It carries out the reaction (2R,3S)-3-isopropylmalate + NAD(+) = 4-methyl-2-oxopentanoate + CO2 + NADH. It functions in the pathway amino-acid biosynthesis; L-leucine biosynthesis; L-leucine from 3-methyl-2-oxobutanoate: step 3/4. Its function is as follows. Catalyzes the oxidation of 3-carboxy-2-hydroxy-4-methylpentanoate (3-isopropylmalate) to 3-carboxy-4-methyl-2-oxopentanoate. The product decarboxylates to 4-methyl-2 oxopentanoate. In Escherichia coli (strain UTI89 / UPEC), this protein is 3-isopropylmalate dehydrogenase.